The primary structure comprises 847 residues: Alpha-glucuronidase (847 aa).

The N-terminal stretch at 1–19 (MVIRSLLLLLLAAIVPVFA) is a signal peptide. N-linked (GlcNAc...) asparagine glycans are attached at residues N52, N238, N321, N353, N586, N692, N740, and N767.

It belongs to the glycosyl hydrolase 67 family.

It localises to the secreted. It catalyses the reaction an alpha-D-glucuronoside + H2O = D-glucuronate + an alcohol. Releases 4-O-methylglucuronic acid from xylan. The sequence is that of Alpha-glucuronidase from Hypocrea jecorina (Trichoderma reesei).